Consider the following 129-residue polypeptide: Small ribosomal subunit protein uS13 (129 aa).

The segment covering 92 to 114 (HKHNLPVRGQRTKTNARTRRGPR) has biased composition (basic residues). The interval 92 to 129 (HKHNLPVRGQRTKTNARTRRGPRKTVAGRGQKRGATKK) is disordered.

Belongs to the universal ribosomal protein uS13 family. In terms of assembly, part of the 30S ribosomal subunit. Forms a loose heterodimer with protein S19. Forms two bridges to the 50S subunit in the 70S ribosome.

Its function is as follows. Located at the top of the head of the 30S subunit, it contacts several helices of the 16S rRNA. In the 70S ribosome it contacts the 23S rRNA (bridge B1a) and protein L5 of the 50S subunit (bridge B1b), connecting the 2 subunits; these bridges are implicated in subunit movement. Contacts the tRNAs in the A and P-sites. In Dehalococcoides mccartyi (strain ATCC BAA-2266 / KCTC 15142 / 195) (Dehalococcoides ethenogenes (strain 195)), this protein is Small ribosomal subunit protein uS13.